The chain runs to 76 residues: MPKRILQGVVTSDANAQTVTVSVERRFTHPVLKKTIRKSKKYRAHDEKNAFKVGDTVRIIECAPKSKTKRWEVLEA.

It belongs to the universal ribosomal protein uS17 family. As to quaternary structure, part of the 30S ribosomal subunit.

Its function is as follows. One of the primary rRNA binding proteins, it binds specifically to the 5'-end of 16S ribosomal RNA. The polypeptide is Small ribosomal subunit protein uS17 (Ruegeria sp. (strain TM1040) (Silicibacter sp.)).